The sequence spans 309 residues: MGAQFSKTAAKGEAAAERPGEAAVASSPSKANGQENGHVKVNGDASPAAAEPGAKEELQANGSAPAADKEEPASGGAATPAAADKDEAAAAPEPGAATADKEAAEAEPAEPGSPSAETEGASASSTSSPKAEDGAAPSPSSETPKKKKKRFSFKKSFKLSGFSFKKSKKEAGEGAEAEGATADGAKDEAAAAAGGDAAAAPGEQAGGAGAEGAEGGESREAEAAEPEQPEQPEQPAAEEPRAEEPSEAVGEKAEEPAPGATADDAPSAAGPEQEAPAATDEPAASAAPSASPEPQPECSPEAPPAPVAE.

A disordered region spans residues 1 to 309 (MGAQFSKTAA…PEAPPAPVAE (309 aa)). A lipid anchor (N-myristoyl glycine) is attached at Gly-2. Ser-26, Ser-27, Ser-29, Ser-46, Ser-63, and Ser-74 each carry phosphoserine. Residues 26 to 35 (SSPSKANGQE) are compositionally biased toward polar residues. Composition is skewed to low complexity over residues 73–82 (ASGGAATPAA), 89–98 (AAAPEPGAAT), and 109–142 (AEPG…PSSE). Thr-79 is modified (phosphothreonine). 6 positions are modified to phosphoserine: Ser-113, Ser-122, Ser-128, Ser-138, Ser-140, and Ser-141. The residue at position 143 (Thr-143) is a Phosphothreonine. Over residues 145–157 (KKKKKRFSFKKSF) the composition is skewed to basic residues. Residues 145–169 (KKKKKRFSFKKSFKLSGFSFKKSKK) form a calmodulin-binding (PSD) region. Residues Ser-152 and Ser-156 each carry the phosphoserine; by PKC modification. Phosphoserine is present on Ser-160. At Ser-163 the chain carries Phosphoserine; by PKC. At Lys-165 the chain carries N6-acetyllysine. Residues 190 to 203 (AAAAGGDAAAAPGE) show a composition bias toward low complexity. Residues 204–215 (QAGGAGAEGAEG) are compositionally biased toward gly residues. 2 positions are modified to phosphoserine: Ser-218 and Ser-246. A compositionally biased stretch (basic and acidic residues) spans 238-255 (EEPRAEEPSEAVGEKAEE). Residues 271–290 (PEQEAPAATDEPAASAAPSA) show a composition bias toward low complexity. Ser-291 bears the Phosphoserine mark. A compositionally biased stretch (pro residues) spans 291–309 (SPEPQPECSPEAPPAPVAE).

This sequence belongs to the MARCKS family. In terms of assembly, interacts with CDC42. Interacts with GTP-bound form of RAB10. Interacts with calmodulin/CALM1. Post-translationally, acetylated at Lys-165 by KAT5; acetylation is required for its subsequent phosphorylation. Deacetylated by SIRT2. Phosphorylation by PKC displaces MARCKS from the membrane. It also inhibits the F-actin cross-linking activity. In terms of processing, myristoylated. A proper myristoylation is essential for the proper distribution to the plasma membrane. As to expression, highest levels found in spleen and brain. Intermediate levels seen in thymus, ovary, lung and heart. Very low levels seen in kidney, skeletal muscle and liver.

The protein resides in the cell membrane. Its subcellular location is the cytoplasm. It is found in the cytoskeleton. In terms of biological role, membrane-associated protein that plays a role in the structural modulation of the actin cytoskeleton, chemotaxis, motility, cell adhesion, phagocytosis, and exocytosis through lipid sequestering and/or protein docking to membranes. Thus, exerts an influence on a plethora of physiological processes, such as embryonic development, tissue regeneration, neuronal plasticity, and inflammation. Sequesters phosphatidylinositol 4,5-bisphosphate (PIP2) at lipid rafts in the plasma membrane of quiescent cells, an action reversed by protein kinase C, ultimately inhibiting exocytosis. During inflammation, promotes the migration and adhesion of inflammatory cells and the secretion of cytokines such as tumor necrosis factor (TNF), particularly in macrophages. Plays an essential role in bacteria-induced intracellular reactive oxygen species (ROS) formation in the monocytic cell type. Participates in the regulation of neurite initiation and outgrowth by interacting with components of cellular machinery including CDC42 that regulates cell shape and process extension through modulation of the cytoskeleton. Plays also a role in axon development by mediating docking and fusion of RAB10-positive vesicles with the plasma membrane. The sequence is that of Myristoylated alanine-rich C-kinase substrate (Marcks) from Rattus norvegicus (Rat).